A 259-amino-acid chain; its full sequence is Ubiquitin-conjugating enzyme E2 J2 (259 aa).

Over 1 to 226 the chain is Cytoplasmic; the sequence is MSSNSVKRAP…AGLQQANRHH (226 aa). The UBC core domain maps to 12 to 162; it reads TATQRLKQDY…DKVFCELFPE (151 aa). C94 functions as the Glycyl thioester intermediate in the catalytic mechanism. The tract at residues 174 to 200 is disordered; sequence QDELSSRPQALPLPDVVPDGETHHGQH. Residues 227 to 247 traverse the membrane as a helical; Anchor for type IV membrane protein segment; the sequence is GLLGGALANLFVIVGFAAFAY. Over 248-259 the chain is Lumenal; that stretch reads TVKYVLRSIAQE.

It belongs to the ubiquitin-conjugating enzyme family.

It localises to the endoplasmic reticulum membrane. The catalysed reaction is S-ubiquitinyl-[E1 ubiquitin-activating enzyme]-L-cysteine + [E2 ubiquitin-conjugating enzyme]-L-cysteine = [E1 ubiquitin-activating enzyme]-L-cysteine + S-ubiquitinyl-[E2 ubiquitin-conjugating enzyme]-L-cysteine.. It functions in the pathway protein modification; protein ubiquitination. Its function is as follows. Catalyzes the covalent attachment of ubiquitin to other proteins. Seems to function in the selective degradation of misfolded membrane proteins from the endoplasmic reticulum (ERAD). In cooperation with the GATOR2 complex, catalyzes 'Lys-6'-linked ubiquitination of NPRL2. The chain is Ubiquitin-conjugating enzyme E2 J2 (UBE2J2) from Bos taurus (Bovine).